The sequence spans 88 residues: Small ribosomal subunit protein bS20 (88 aa).

Residues 1–28 form a disordered region; sequence MANIKSQIKRNKTNEKARLRNKAVKSSL.

This sequence belongs to the bacterial ribosomal protein bS20 family.

Binds directly to 16S ribosomal RNA. The protein is Small ribosomal subunit protein bS20 of Streptomyces avermitilis (strain ATCC 31267 / DSM 46492 / JCM 5070 / NBRC 14893 / NCIMB 12804 / NRRL 8165 / MA-4680).